A 241-amino-acid chain; its full sequence is tRNA (guanine-N(7)-)-methyltransferase (241 aa).

Residues G61, E84, R86, N117, A118, and L137 each contribute to the S-adenosyl-L-methionine site. D140 is a catalytic residue. Residues 141-149 form an alphaC helix region; it reads PHFKKTKHK. S-adenosyl-L-methionine is bound by residues T215 and E217. Positions 215 to 223 are alpha6 helix; sequence TEEGKKVQR.

The protein belongs to the class I-like SAM-binding methyltransferase superfamily. TrmB family. Catalytic component of the METTL1-WDR4 complex, composed of mettl1 and wdr4.

The protein localises to the nucleus. The catalysed reaction is guanosine(46) in tRNA + S-adenosyl-L-methionine = N(7)-methylguanosine(46) in tRNA + S-adenosyl-L-homocysteine. The enzyme catalyses a guanosine in mRNA + S-adenosyl-L-methionine = an N(7)-methylguanosine in mRNA + S-adenosyl-L-homocysteine. It carries out the reaction a guanosine in miRNA + S-adenosyl-L-methionine = an N(7)-methylguanosine in miRNA + S-adenosyl-L-homocysteine. Its pathway is tRNA modification; N(7)-methylguanine-tRNA biosynthesis. Its function is as follows. Catalytic component of METTL1-WDR4 methyltransferase complex that mediates the formation of N(7)-methylguanine in a subset of RNA species, such as tRNAs, mRNAs and microRNAs (miRNAs). Catalyzes the formation of N(7)-methylguanine at position 46 (m7G46) in a large subset of tRNAs that contain the 5'-RAGGU-3' motif within the variable loop. M7G46 interacts with C13-G22 in the D-loop to stabilize tRNA tertiary structure and protect tRNAs from decay. Also acts as a methyltransferase for a subset of internal N(7)-methylguanine in mRNAs. Internal N(7)-methylguanine methylation of mRNAs in response to stress promotes their relocalization to stress granules, thereby suppressing their translation. Also methylates a specific subset of miRNAs. The sequence is that of tRNA (guanine-N(7)-)-methyltransferase (mettl1) from Danio rerio (Zebrafish).